Consider the following 350-residue polypeptide: Protein-glutamate methylesterase/protein-glutamine glutaminase 6 (350 aa).

The region spanning 11-126 (RVLVVDDSAA…LAPVREELLE (116 aa)) is the Response regulatory domain. The residue at position 62 (aspartate 62) is a 4-aspartylphosphate. Positions 150-347 (ELEPARVAVV…ARLVEFARDA (198 aa)) constitute a CheB-type methylesterase domain. Active-site residues include serine 162, histidine 189, and aspartate 289.

This sequence belongs to the CheB family. Phosphorylated by CheA. Phosphorylation of the N-terminal regulatory domain activates the methylesterase activity.

The protein resides in the cytoplasm. It catalyses the reaction [protein]-L-glutamate 5-O-methyl ester + H2O = L-glutamyl-[protein] + methanol + H(+). The catalysed reaction is L-glutaminyl-[protein] + H2O = L-glutamyl-[protein] + NH4(+). Its function is as follows. Involved in chemotaxis. Part of a chemotaxis signal transduction system that modulates chemotaxis in response to various stimuli. Catalyzes the demethylation of specific methylglutamate residues introduced into the chemoreceptors (methyl-accepting chemotaxis proteins or MCP) by CheR. Also mediates the irreversible deamidation of specific glutamine residues to glutamic acid. This Anaeromyxobacter dehalogenans (strain 2CP-C) protein is Protein-glutamate methylesterase/protein-glutamine glutaminase 6.